The chain runs to 116 residues: Ly-6/neurotoxin-like protein 1 (116 aa).

Residues 1–20 (MTPLLTLILVVLMGLPLAQA) form the signal peptide. The region spanning 21–105 (LDCHVCAYNG…LATPATLALA (85 aa)) is the UPAR/Ly6 domain. Cystine bridges form between C23-C46, C26-C33, C39-C64, C68-C85, and C86-C91. N92 is lipidated: GPI-anchor amidated asparagine. A propeptide spans 93-116 (GAGLATPATLALAPILLATLWGLL) (removed in mature form).

In terms of assembly, interacts with nAChRs containing alpha-4:beta-2 (CHRNA4:CHRNB2) and alpha-7 (CHRNA7) subunits. Interacts with CHRNA4 probably in the endoplasmic reticulum prior to nAChR pentameric assembly. Interacts with KCNA2/Potassium voltage-gated channel subfamily A member 2.

It is found in the cell membrane. The protein resides in the cell projection. It localises to the dendrite. Its subcellular location is the endoplasmic reticulum. Acts in different tissues through interaction to nicotinic acetylcholine receptors (nAChRs). The proposed role as modulator of nAChR activity seems to be dependent on the nAChR subtype and stoichiometry, and to involve an effect on nAChR trafficking and its cell surface expression, and on single channel properties of the nAChR inserted in the plasma membrane. Modulates functional properties of nicotinic acetylcholine receptors (nAChRs) to prevent excessive excitation, and hence neurodegeneration. Enhances desensitization by increasing both the rate and extent of desensitization of alpha-4:beta-2-containing nAChRs and slowing recovery from desensitization. Promotes large amplitude ACh-evoked currents through alpha-4:beta-2 nAChRs. Is involved in regulation of the nAChR pentameric assembly in the endoplasmic reticulum. Shifts stoichiometry from high sensitivity alpha-4(2):beta-2(3) to low sensitivity alpha-4(3):beta-2(2) nAChR. In vitro modulates alpha-3:beta-4-containing nAChRs. Reduces cell surface expression of (alpha-3:beta-4)(2):beta-4 and (alpha-3:beta-4)(2):alpha-5 nAChRs suggesting an interaction with nAChR alpha-3(-):(+)beta-4 subunit interfaces and an allosteric mode. Corresponding single channel effects characterized by decreased unitary conductance, altered burst proportions and enhanced desensitization/inactivation seem to depend on nAChR alpha:alpha subunit interfaces and are greater in (alpha-3:beta-2)(2):alpha-3 when compared to (alpha-3:beta-2)(2):alpha-5 nAChRs. Prevents plasticity in the primary visual cortex late in life. The chain is Ly-6/neurotoxin-like protein 1 from Pan troglodytes (Chimpanzee).